A 350-amino-acid polypeptide reads, in one-letter code: Ion-translocating oxidoreductase complex subunit D (350 aa).

Helical transmembrane passes span 25–45 (ILCA…GTVI), 89–109 (IPPL…IVIV), and 129–149 (VMLL…SVIA). Thr-185 carries the post-translational modification FMN phosphoryl threonine. The next 5 helical transmembrane spans lie at 212-232 (GFGV…LVML), 239-259 (WHIT…GYLL), 264-284 (FTGP…FFIA), 298-318 (LVFG…GGYP), and 319-339 (DAFA…DHYM).

Belongs to the NqrB/RnfD family. As to quaternary structure, the complex is composed of six subunits: RnfA, RnfB, RnfC, RnfD, RnfE and RnfG. Requires FMN as cofactor.

The protein localises to the cell inner membrane. Functionally, part of a membrane-bound complex that couples electron transfer with translocation of ions across the membrane. This Shewanella sediminis (strain HAW-EB3) protein is Ion-translocating oxidoreductase complex subunit D.